The following is a 384-amino-acid chain: S-adenosylmethionine synthase (384 aa).

Histidine 15 lines the ATP pocket. Aspartate 17 is a Mg(2+) binding site. Residue glutamate 43 participates in K(+) binding. L-methionine contacts are provided by glutamate 56 and glutamine 99. Residues glutamine 99 to arginine 109 form a flexible loop region. ATP-binding positions include aspartate 164–lysine 166, arginine 230–phenylalanine 231, aspartate 239, arginine 245–lysine 246, alanine 262, and lysine 266. Position 239 (aspartate 239) interacts with L-methionine. Position 270 (lysine 270) interacts with L-methionine.

Belongs to the AdoMet synthase family. As to quaternary structure, homotetramer; dimer of dimers. Mg(2+) serves as cofactor. K(+) is required as a cofactor.

Its subcellular location is the cytoplasm. It carries out the reaction L-methionine + ATP + H2O = S-adenosyl-L-methionine + phosphate + diphosphate. It participates in amino-acid biosynthesis; S-adenosyl-L-methionine biosynthesis; S-adenosyl-L-methionine from L-methionine: step 1/1. Catalyzes the formation of S-adenosylmethionine (AdoMet) from methionine and ATP. The overall synthetic reaction is composed of two sequential steps, AdoMet formation and the subsequent tripolyphosphate hydrolysis which occurs prior to release of AdoMet from the enzyme. The sequence is that of S-adenosylmethionine synthase from Yersinia enterocolitica serotype O:8 / biotype 1B (strain NCTC 13174 / 8081).